We begin with the raw amino-acid sequence, 178 residues long: RNA pyrophosphohydrolase (178 aa).

The Nudix hydrolase domain occupies 18–171; that stretch reads PYRPCVGLMV…KRKVYEQVVA (154 aa). The Nudix box motif lies at 59–80; it reads GGIDKGEDPAQAALRELYEETG.

This sequence belongs to the Nudix hydrolase family. RppH subfamily. Requires a divalent metal cation as cofactor.

In terms of biological role, accelerates the degradation of transcripts by removing pyrophosphate from the 5'-end of triphosphorylated RNA, leading to a more labile monophosphorylated state that can stimulate subsequent ribonuclease cleavage. The protein is RNA pyrophosphohydrolase of Brucella abortus (strain 2308).